The chain runs to 518 residues: Integrator complex subunit 14 (518 aa).

The VWFA domain occupies 2–204 (PTVVVMDVSL…KNVQSMFGKL (203 aa)). Residues Ser-10, Ser-12, and Thr-86 each coordinate Mg(2+). Residues 373 to 394 (SDAKENPYGDDDNKSPFPLQPK) are disordered. The segment covering 374-386 (DAKENPYGDDDNK) has biased composition (basic and acidic residues).

The protein belongs to the Integrator subunit 14 family. As to quaternary structure, component of the Integrator complex, composed of core subunits INTS1, INTS2, INTS3, INTS4, INTS5, INTS6, INTS7, INTS8, INTS9/RC74, INTS10, INTS11/CPSF3L, INTS12, INTS13, INTS14 and INTS15. The core complex associates with protein phosphatase 2A subunits PPP2CA and PPP2R1A, to form the Integrator-PP2A (INTAC) complex. INTS14 is part of the tail subcomplex, composed of INTS10, INTS13, INTS14 and INTS15.

The protein resides in the nucleus. Functionally, component of the integrator complex, a multiprotein complex that terminates RNA polymerase II (Pol II) transcription in the promoter-proximal region of genes. The integrator complex provides a quality checkpoint during transcription elongation by driving premature transcription termination of transcripts that are unfavorably configured for transcriptional elongation: the complex terminates transcription by (1) catalyzing dephosphorylation of the C-terminal domain (CTD) of Pol II subunit POLR2A/RPB1 and SUPT5H/SPT5, (2) degrading the exiting nascent RNA transcript via endonuclease activity and (3) promoting the release of Pol II from bound DNA. The integrator complex is also involved in terminating the synthesis of non-coding Pol II transcripts, such as enhancer RNAs (eRNAs), small nuclear RNAs (snRNAs), telomerase RNAs and long non-coding RNAs (lncRNAs). Within the integrator complex, INTS14 is part of the integrator tail module that acts as a platform for the recruitment of transcription factors at promoters. The polypeptide is Integrator complex subunit 14 (Gallus gallus (Chicken)).